Consider the following 94-residue polypeptide: Exodeoxyribonuclease 7 small subunit (94 aa).

The interval 1 to 21 (MPRAPNDAPSASATPSATPAS) is disordered.

This sequence belongs to the XseB family. As to quaternary structure, heterooligomer composed of large and small subunits.

The protein localises to the cytoplasm. It catalyses the reaction Exonucleolytic cleavage in either 5'- to 3'- or 3'- to 5'-direction to yield nucleoside 5'-phosphates.. Its function is as follows. Bidirectionally degrades single-stranded DNA into large acid-insoluble oligonucleotides, which are then degraded further into small acid-soluble oligonucleotides. In Ralstonia pickettii (strain 12J), this protein is Exodeoxyribonuclease 7 small subunit.